Consider the following 427-residue polypeptide: Serine--tRNA ligase (427 aa).

Residue 231-233 participates in L-serine binding; the sequence is TAE. An ATP-binding site is contributed by 262–264; sequence RSE. Glu-285 contacts L-serine. 349 to 352 contributes to the ATP binding site; that stretch reads EISS. Ser-385 provides a ligand contact to L-serine.

It belongs to the class-II aminoacyl-tRNA synthetase family. Type-1 seryl-tRNA synthetase subfamily. In terms of assembly, homodimer. The tRNA molecule binds across the dimer.

It localises to the cytoplasm. It catalyses the reaction tRNA(Ser) + L-serine + ATP = L-seryl-tRNA(Ser) + AMP + diphosphate + H(+). The enzyme catalyses tRNA(Sec) + L-serine + ATP = L-seryl-tRNA(Sec) + AMP + diphosphate + H(+). The protein operates within aminoacyl-tRNA biosynthesis; selenocysteinyl-tRNA(Sec) biosynthesis; L-seryl-tRNA(Sec) from L-serine and tRNA(Sec): step 1/1. In terms of biological role, catalyzes the attachment of serine to tRNA(Ser). Is also able to aminoacylate tRNA(Sec) with serine, to form the misacylated tRNA L-seryl-tRNA(Sec), which will be further converted into selenocysteinyl-tRNA(Sec). In Brucella melitensis biotype 2 (strain ATCC 23457), this protein is Serine--tRNA ligase.